The primary structure comprises 502 residues: UDP-N-acetylmuramoylalanine--D-glutamate ligase (502 aa).

Residue 129-135 participates in ATP binding; sequence GTNGKTT.

The protein belongs to the MurCDEF family.

The protein resides in the cytoplasm. It carries out the reaction UDP-N-acetyl-alpha-D-muramoyl-L-alanine + D-glutamate + ATP = UDP-N-acetyl-alpha-D-muramoyl-L-alanyl-D-glutamate + ADP + phosphate + H(+). Its pathway is cell wall biogenesis; peptidoglycan biosynthesis. Its function is as follows. Cell wall formation. Catalyzes the addition of glutamate to the nucleotide precursor UDP-N-acetylmuramoyl-L-alanine (UMA). The protein is UDP-N-acetylmuramoylalanine--D-glutamate ligase of Burkholderia ambifaria (strain MC40-6).